A 361-amino-acid chain; its full sequence is Chorismate synthase (361 aa).

An NADP(+)-binding site is contributed by Arg48. FMN is bound by residues 125–127, 238–239, Gly278, 293–297, and Arg319; these read RSS, NA, and KPTSS.

The protein belongs to the chorismate synthase family. As to quaternary structure, homotetramer. The cofactor is FMNH2.

The catalysed reaction is 5-O-(1-carboxyvinyl)-3-phosphoshikimate = chorismate + phosphate. Its pathway is metabolic intermediate biosynthesis; chorismate biosynthesis; chorismate from D-erythrose 4-phosphate and phosphoenolpyruvate: step 7/7. Functionally, catalyzes the anti-1,4-elimination of the C-3 phosphate and the C-6 proR hydrogen from 5-enolpyruvylshikimate-3-phosphate (EPSP) to yield chorismate, which is the branch point compound that serves as the starting substrate for the three terminal pathways of aromatic amino acid biosynthesis. This reaction introduces a second double bond into the aromatic ring system. The sequence is that of Chorismate synthase from Aliivibrio fischeri (strain MJ11) (Vibrio fischeri).